A 511-amino-acid chain; its full sequence is NAD(P)H-quinone oxidoreductase subunit 2 B, chloroplastic (511 aa).

Transmembrane regions (helical) follow at residues 24-44 (LLLF…GLIL), 57-77 (IPWL…ALLF), 99-119 (IFQF…VEYI), 124-144 (MAIT…MFLC), 149-169 (LITI…LSGY), 183-203 (YLLM…WLYG), 227-247 (PGIS…LSPA), 295-315 (WHLL…LIAI), 323-343 (MLAY…IVGD), 354-374 (YMLF…LFGL), 395-415 (ALSL…AGFF), 418-438 (LHLF…IGLL), and 484-504 (MIVC…IIAI).

Belongs to the complex I subunit 2 family. In terms of assembly, NDH is composed of at least 16 different subunits, 5 of which are encoded in the nucleus.

It is found in the plastid. The protein resides in the chloroplast thylakoid membrane. It catalyses the reaction a plastoquinone + NADH + (n+1) H(+)(in) = a plastoquinol + NAD(+) + n H(+)(out). The enzyme catalyses a plastoquinone + NADPH + (n+1) H(+)(in) = a plastoquinol + NADP(+) + n H(+)(out). NDH shuttles electrons from NAD(P)H:plastoquinone, via FMN and iron-sulfur (Fe-S) centers, to quinones in the photosynthetic chain and possibly in a chloroplast respiratory chain. The immediate electron acceptor for the enzyme in this species is believed to be plastoquinone. Couples the redox reaction to proton translocation, and thus conserves the redox energy in a proton gradient. The sequence is that of NAD(P)H-quinone oxidoreductase subunit 2 B, chloroplastic from Nandina domestica (Heavenly bamboo).